The primary structure comprises 660 residues: Bifunctional polymyxin resistance protein ArnA (660 aa).

Residues 1–304 (MKAVIFAYHD…TLGLVAGACL (304 aa)) form a formyltransferase ArnAFT region. The Proton donor; for formyltransferase activity role is filled by His-104. (6R)-10-formyltetrahydrofolate contacts are provided by residues Arg-114 and 136-140 (VKRAD). The segment at 314–660 (RRIRVLILGV…RSVDIAERAS (347 aa)) is dehydrogenase ArnADH. NAD(+) is bound by residues Asp-347 and 368–369 (DI). Residues Ala-393, Tyr-398, and 432-433 (TS) contribute to the UDP-alpha-D-glucuronate site. Catalysis depends on Glu-434, which acts as the Proton acceptor; for decarboxylase activity. UDP-alpha-D-glucuronate-binding positions include Arg-460, Asn-492, 526-535 (KLIDGGQQKR), and Tyr-613. Arg-619 acts as the Proton donor; for decarboxylase activity in catalysis.

In the N-terminal section; belongs to the Fmt family. UDP-L-Ara4N formyltransferase subfamily. It in the C-terminal section; belongs to the NAD(P)-dependent epimerase/dehydratase family. UDP-glucuronic acid decarboxylase subfamily. Homohexamer, formed by a dimer of trimers.

It catalyses the reaction UDP-alpha-D-glucuronate + NAD(+) = UDP-beta-L-threo-pentopyranos-4-ulose + CO2 + NADH. The enzyme catalyses UDP-4-amino-4-deoxy-beta-L-arabinose + (6R)-10-formyltetrahydrofolate = UDP-4-deoxy-4-formamido-beta-L-arabinose + (6S)-5,6,7,8-tetrahydrofolate + H(+). The protein operates within nucleotide-sugar biosynthesis; UDP-4-deoxy-4-formamido-beta-L-arabinose biosynthesis; UDP-4-deoxy-4-formamido-beta-L-arabinose from UDP-alpha-D-glucuronate: step 1/3. Its pathway is nucleotide-sugar biosynthesis; UDP-4-deoxy-4-formamido-beta-L-arabinose biosynthesis; UDP-4-deoxy-4-formamido-beta-L-arabinose from UDP-alpha-D-glucuronate: step 3/3. It functions in the pathway bacterial outer membrane biogenesis; lipopolysaccharide biosynthesis. Bifunctional enzyme that catalyzes the oxidative decarboxylation of UDP-glucuronic acid (UDP-GlcUA) to UDP-4-keto-arabinose (UDP-Ara4O) and the addition of a formyl group to UDP-4-amino-4-deoxy-L-arabinose (UDP-L-Ara4N) to form UDP-L-4-formamido-arabinose (UDP-L-Ara4FN). The modified arabinose is attached to lipid A and is required for resistance to polymyxin and cationic antimicrobial peptides. In Salmonella paratyphi A (strain ATCC 9150 / SARB42), this protein is Bifunctional polymyxin resistance protein ArnA.